A 178-amino-acid chain; its full sequence is Bifunctional protein PyrR (178 aa).

Substrate-binding positions include 41-42, 103-111, and Arg136; these read RR and DDVLYTGRT. Positions 99–111 match the PRPP-binding motif; it reads VILVDDVLYTGRT.

This sequence belongs to the purine/pyrimidine phosphoribosyltransferase family. PyrR subfamily. As to quaternary structure, homodimer and homohexamer; in equilibrium.

It catalyses the reaction UMP + diphosphate = 5-phospho-alpha-D-ribose 1-diphosphate + uracil. In terms of biological role, regulates transcriptional attenuation of the pyrimidine nucleotide (pyr) operon by binding in a uridine-dependent manner to specific sites on pyr mRNA. This disrupts an antiterminator hairpin in the RNA and favors formation of a downstream transcription terminator, leading to a reduced expression of downstream genes. Also displays a weak uracil phosphoribosyltransferase activity which is not physiologically significant. The polypeptide is Bifunctional protein PyrR (Clostridium acetobutylicum (strain ATCC 824 / DSM 792 / JCM 1419 / IAM 19013 / LMG 5710 / NBRC 13948 / NRRL B-527 / VKM B-1787 / 2291 / W)).